A 296-amino-acid polypeptide reads, in one-letter code: MLIGSHVSMNGKKMLQGSAEEAHRLNEKTFMIYTGAPQNTRRKAIEDLNIEAGHEAMKEYGLSNIVVHAPYIINIANTQKPHVFELGVDFLQKEIERTEAIGAKDIVLHPGSHVGAGSEAGIKKIIEGLNEVLTNDNDVRIALETMAGKGSEVGRTFEELAQIIEGVNHNERLSICFDTCHTHDAGYKVKDDFDSVLEEFDNVIGLDRIKVLHVNDSKNEIGAHKDRHENIGFGHIGFDALNYIVHHEVFENIPKILETPFVGEDKKNKRPPYKHEIEMLETETFNPNMKEIIMSE.

Residues His68, His109, Glu144, Asp178, His181, His213, Asp226, His228, and Glu258 each coordinate Zn(2+).

The protein belongs to the AP endonuclease 2 family. Requires Zn(2+) as cofactor.

The catalysed reaction is Endonucleolytic cleavage to 5'-phosphooligonucleotide end-products.. Functionally, endonuclease IV plays a role in DNA repair. It cleaves phosphodiester bonds at apurinic or apyrimidinic (AP) sites, generating a 3'-hydroxyl group and a 5'-terminal sugar phosphate. The chain is Probable endonuclease 4 from Staphylococcus carnosus (strain TM300).